The primary structure comprises 245 residues: Ribonuclease PH (245 aa).

Phosphate contacts are provided by residues R87 and 125-127 (GTR).

Belongs to the RNase PH family. Homohexameric ring arranged as a trimer of dimers.

It carries out the reaction tRNA(n+1) + phosphate = tRNA(n) + a ribonucleoside 5'-diphosphate. Functionally, phosphorolytic 3'-5' exoribonuclease that plays an important role in tRNA 3'-end maturation. Removes nucleotide residues following the 3'-CCA terminus of tRNAs; can also add nucleotides to the ends of RNA molecules by using nucleoside diphosphates as substrates, but this may not be physiologically important. Probably plays a role in initiation of 16S rRNA degradation (leading to ribosome degradation) during starvation. This chain is Ribonuclease PH, found in Streptomyces coelicolor (strain ATCC BAA-471 / A3(2) / M145).